A 448-amino-acid chain; its full sequence is Phosphoglucosamine mutase (448 aa).

Ser-100 serves as the catalytic Phosphoserine intermediate. The Mg(2+) site is built by Ser-100, Asp-240, Asp-242, and Asp-244. Residue Ser-100 is modified to Phosphoserine.

Belongs to the phosphohexose mutase family. The cofactor is Mg(2+). Activated by phosphorylation.

It catalyses the reaction alpha-D-glucosamine 1-phosphate = D-glucosamine 6-phosphate. Catalyzes the conversion of glucosamine-6-phosphate to glucosamine-1-phosphate. In Bacillus cereus (strain G9842), this protein is Phosphoglucosamine mutase.